A 57-amino-acid polypeptide reads, in one-letter code: Large ribosomal subunit protein bL32 (57 aa).

Belongs to the bacterial ribosomal protein bL32 family.

In Geobacillus sp. (strain WCH70), this protein is Large ribosomal subunit protein bL32.